A 424-amino-acid polypeptide reads, in one-letter code: Zinc finger and BTB domain-containing protein 6 (424 aa).

Residues 33–97 (CDVSIYINDT…CYTGALEVKR (65 aa)) form the BTB domain. Ser202 is subject to Phosphoserine. C2H2-type zinc fingers lie at residues 301 to 323 (HQCPRCPRGFLHVENYLRHLKMH), 326 to 348 (FLCLQCGKTFTQKKNLNRHIRGH), 354 to 376 (FQCTVCLKTFTAKSTLQDHLNIH), and 382 to 405 (YKCHCCDMDFKHKSALKKHLTSVH). The interval 402-424 (TSVHGRSSGEKLSRPDLKRQSLL) is disordered. Positions 408-424 (SSGEKLSRPDLKRQSLL) are enriched in basic and acidic residues.

In terms of tissue distribution, widely expressed with highest levels in brain.

The protein localises to the nucleus. In terms of biological role, may be involved in transcriptional regulation. In Homo sapiens (Human), this protein is Zinc finger and BTB domain-containing protein 6 (ZBTB6).